Reading from the N-terminus, the 303-residue chain is Quinolinate synthase (303 aa).

His-23 and Ser-40 together coordinate iminosuccinate. Position 85 (Cys-85) interacts with [4Fe-4S] cluster. Residues 111–113 and Ser-128 contribute to the iminosuccinate site; that span reads YVN. Cys-171 is a binding site for [4Fe-4S] cluster. Residues 197-199 and Thr-214 contribute to the iminosuccinate site; that span reads HPE. Position 259 (Cys-259) interacts with [4Fe-4S] cluster.

The protein belongs to the quinolinate synthase family. Type 2 subfamily. The cofactor is [4Fe-4S] cluster.

It is found in the cytoplasm. The enzyme catalyses iminosuccinate + dihydroxyacetone phosphate = quinolinate + phosphate + 2 H2O + H(+). The protein operates within cofactor biosynthesis; NAD(+) biosynthesis; quinolinate from iminoaspartate: step 1/1. In terms of biological role, catalyzes the condensation of iminoaspartate with dihydroxyacetone phosphate to form quinolinate. This chain is Quinolinate synthase, found in Thermodesulfovibrio yellowstonii (strain ATCC 51303 / DSM 11347 / YP87).